Here is a 286-residue protein sequence, read N- to C-terminus: DegV domain-containing protein M6_Spy1658 (286 aa).

The 280-residue stretch at 3–282 folds into the DegV domain; it reads FTIMTDSTAD…PNTLAVFVIG (280 aa). Residues T62 and S94 each contribute to the hexadecanoate site.

In terms of biological role, may bind long-chain fatty acids, such as palmitate, and may play a role in lipid transport or fatty acid metabolism. The polypeptide is DegV domain-containing protein M6_Spy1658 (Streptococcus pyogenes serotype M6 (strain ATCC BAA-946 / MGAS10394)).